Reading from the N-terminus, the 892-residue chain is Formin-like protein 8 (892 aa).

An N-terminal signal peptide occupies residues 1–23 (MPPAIARFVAIAAVLLCGHVAVA). Positions 43–119 (FPIEWTPPPS…SGSGSGHHGG (77 aa)) are disordered. Positions 47 to 59 (WTPPPSPPPPPAP) are enriched in pro residues. A compositionally biased stretch (low complexity) spans 87–111 (TTPTSPGTTPSPTTVAADVSKTPSG). The helical transmembrane segment at 126–146 (IVAAGAGAAAAVALLGFACAF) threads the bilayer. Residues 188 to 457 (PTTPARHHGP…GSGEPRPKLK (270 aa)) form a disordered region. Positions 210–230 (LRSERARRGVSRDEDADHPSP) are enriched in basic and acidic residues. Composition is skewed to low complexity over residues 268–286 (AEAW…TTAS), 297–306 (FFPPVAAIAA), and 321–330 (RTRFSTGSTP). Residues 339 to 383 (SPRPVQPSNAPPPPPPPPPPPPPPPPPKLNTAPKPPPPPPPPPSV) are compositionally biased toward pro residues. Residues 424 to 436 (AATTVDNNGSTSM) show a composition bias toward polar residues. In terms of domain architecture, FH2 spans 446–867 (DGGSGEPRPK…GSARSFRISA (422 aa)).

Belongs to the formin-like family. Class-I subfamily.

The protein resides in the membrane. This Oryza sativa subsp. japonica (Rice) protein is Formin-like protein 8 (FH8).